The chain runs to 409 residues: Probable tRNA pseudouridine synthase D (409 aa).

The active-site Nucleophile is the D73. The region spanning 146–365 (GFPNFFGDQR…SSGDRRIISA (220 aa)) is the TRUD domain.

This sequence belongs to the pseudouridine synthase TruD family.

It carries out the reaction uridine(13) in tRNA = pseudouridine(13) in tRNA. Functionally, could be responsible for synthesis of pseudouridine from uracil-13 in transfer RNAs. In Thermoplasma volcanium (strain ATCC 51530 / DSM 4299 / JCM 9571 / NBRC 15438 / GSS1), this protein is Probable tRNA pseudouridine synthase D.